A 137-amino-acid chain; its full sequence is Basic phospholipase A2 DsM-S1 (137 aa).

The N-terminal stretch at 1-16 is a signal peptide; that stretch reads MRTLWIVAVCLIGVEG. 7 disulfide bridges follow: Cys42/Cys131, Cys44/Cys60, Cys59/Cys111, Cys65/Cys137, Cys66/Cys104, Cys73/Cys97, and Cys91/Cys102. Ca(2+)-binding residues include Tyr43, Gly45, and Gly47. His63 is a catalytic residue. Asp64 provides a ligand contact to Ca(2+). Asp105 is an active-site residue.

This sequence belongs to the phospholipase A2 family. Group II subfamily. D49 sub-subfamily. Ca(2+) serves as cofactor. In terms of tissue distribution, expressed by the venom gland.

The protein localises to the secreted. The catalysed reaction is a 1,2-diacyl-sn-glycero-3-phosphocholine + H2O = a 1-acyl-sn-glycero-3-phosphocholine + a fatty acid + H(+). Snake venom phospholipase A2 (PLA2) that is neurotoxic. PLA2 catalyzes the calcium-dependent hydrolysis of the 2-acyl groups in 3-sn-phosphoglycerides. The protein is Basic phospholipase A2 DsM-S1 of Daboia siamensis (Eastern Russel's viper).